Here is a 358-residue protein sequence, read N- to C-terminus: Protein-glutamate methylesterase/protein-glutamine glutaminase 3 (358 aa).

The 117-residue stretch at 2–118 folds into the Response regulatory domain; that stretch reads KILVVDDSAL…CGRLQEVAPL (117 aa). Residue Asp-52 is modified to 4-aspartylphosphate. In terms of domain architecture, CheB-type methylesterase spans 155 to 325; it reads NNEDHQLAIM…VPSMPEALLK (171 aa). Catalysis depends on residues Ser-167, His-194, and Asp-291.

Belongs to the CheB family. Post-translationally, phosphorylated by CheA. Phosphorylation of the N-terminal regulatory domain activates the methylesterase activity.

It localises to the cytoplasm. The enzyme catalyses [protein]-L-glutamate 5-O-methyl ester + H2O = L-glutamyl-[protein] + methanol + H(+). The catalysed reaction is L-glutaminyl-[protein] + H2O = L-glutamyl-[protein] + NH4(+). Functionally, involved in chemotaxis. Part of a chemotaxis signal transduction system that modulates chemotaxis in response to various stimuli. Catalyzes the demethylation of specific methylglutamate residues introduced into the chemoreceptors (methyl-accepting chemotaxis proteins or MCP) by CheR. Also mediates the irreversible deamidation of specific glutamine residues to glutamic acid. This is Protein-glutamate methylesterase/protein-glutamine glutaminase 3 from Vibrio cholerae serotype O1 (strain ATCC 39315 / El Tor Inaba N16961).